The sequence spans 393 residues: Lipid-A-disaccharide synthase (393 aa).

This sequence belongs to the LpxB family.

It carries out the reaction a lipid X + a UDP-2-N,3-O-bis[(3R)-3-hydroxyacyl]-alpha-D-glucosamine = a lipid A disaccharide + UDP + H(+). The protein operates within bacterial outer membrane biogenesis; LPS lipid A biosynthesis. In terms of biological role, condensation of UDP-2,3-diacylglucosamine and 2,3-diacylglucosamine-1-phosphate to form lipid A disaccharide, a precursor of lipid A, a phosphorylated glycolipid that anchors the lipopolysaccharide to the outer membrane of the cell. This is Lipid-A-disaccharide synthase from Colwellia psychrerythraea (strain 34H / ATCC BAA-681) (Vibrio psychroerythus).